The sequence spans 348 residues: Histidinol-phosphate aminotransferase (348 aa).

Lys-211 carries the N6-(pyridoxal phosphate)lysine modification.

Belongs to the class-II pyridoxal-phosphate-dependent aminotransferase family. Histidinol-phosphate aminotransferase subfamily. As to quaternary structure, homodimer. Requires pyridoxal 5'-phosphate as cofactor.

It catalyses the reaction L-histidinol phosphate + 2-oxoglutarate = 3-(imidazol-4-yl)-2-oxopropyl phosphate + L-glutamate. Its pathway is amino-acid biosynthesis; L-histidine biosynthesis; L-histidine from 5-phospho-alpha-D-ribose 1-diphosphate: step 7/9. This chain is Histidinol-phosphate aminotransferase, found in Chlorobaculum tepidum (strain ATCC 49652 / DSM 12025 / NBRC 103806 / TLS) (Chlorobium tepidum).